The chain runs to 184 residues: NADH-quinone oxidoreductase subunit B (184 aa).

C63, C64, C128, and C158 together coordinate [4Fe-4S] cluster.

The protein belongs to the complex I 20 kDa subunit family. NDH-1 is composed of 14 different subunits. Subunits NuoB, C, D, E, F, and G constitute the peripheral sector of the complex. [4Fe-4S] cluster serves as cofactor.

The protein localises to the cell inner membrane. The enzyme catalyses a quinone + NADH + 5 H(+)(in) = a quinol + NAD(+) + 4 H(+)(out). NDH-1 shuttles electrons from NADH, via FMN and iron-sulfur (Fe-S) centers, to quinones in the respiratory chain. The immediate electron acceptor for the enzyme in this species is believed to be ubiquinone. Couples the redox reaction to proton translocation (for every two electrons transferred, four hydrogen ions are translocated across the cytoplasmic membrane), and thus conserves the redox energy in a proton gradient. This is NADH-quinone oxidoreductase subunit B from Xanthomonas axonopodis pv. citri (strain 306).